The chain runs to 217 residues: N-(5'-phosphoribosyl)anthranilate isomerase (217 aa).

It belongs to the TrpF family.

It catalyses the reaction N-(5-phospho-beta-D-ribosyl)anthranilate = 1-(2-carboxyphenylamino)-1-deoxy-D-ribulose 5-phosphate. Its pathway is amino-acid biosynthesis; L-tryptophan biosynthesis; L-tryptophan from chorismate: step 3/5. The chain is N-(5'-phosphoribosyl)anthranilate isomerase from Chlorobium phaeovibrioides (strain DSM 265 / 1930) (Prosthecochloris vibrioformis (strain DSM 265)).